We begin with the raw amino-acid sequence, 367 residues long: Chorismate synthase (367 aa).

NADP(+) is bound at residue R48. FMN-binding positions include 125–127 (RSS), 243–244 (NA), G283, 298–302 (KPTSS), and R324.

This sequence belongs to the chorismate synthase family. In terms of assembly, homotetramer. The cofactor is FMNH2.

It catalyses the reaction 5-O-(1-carboxyvinyl)-3-phosphoshikimate = chorismate + phosphate. It participates in metabolic intermediate biosynthesis; chorismate biosynthesis; chorismate from D-erythrose 4-phosphate and phosphoenolpyruvate: step 7/7. Catalyzes the anti-1,4-elimination of the C-3 phosphate and the C-6 proR hydrogen from 5-enolpyruvylshikimate-3-phosphate (EPSP) to yield chorismate, which is the branch point compound that serves as the starting substrate for the three terminal pathways of aromatic amino acid biosynthesis. This reaction introduces a second double bond into the aromatic ring system. The polypeptide is Chorismate synthase (Psychrobacter cryohalolentis (strain ATCC BAA-1226 / DSM 17306 / VKM B-2378 / K5)).